Consider the following 209-residue polypeptide: Floral homeotic protein GLOBOSA (209 aa).

The MADS-box domain maps to 3–57; that stretch reads RGKIEIKRIENSSNRQVTYSKRRNGILKKAKEISVLCDARVSVIIFASSGKMHEF. Residues 82–173 form the K-box domain; the sequence is HENLDNEINK…QLEIASMNRN (92 aa).

As to expression, expressed mainly in floral organs and, within the flower, expression is restricted to petals and stamens.

The protein localises to the nucleus. Functionally, transcription factor involved in the genetic control of flower development. Acts in conjunction with DEFICIENS (defA). In Nicotiana tabacum (Common tobacco), this protein is Floral homeotic protein GLOBOSA (GLO).